The following is a 551-amino-acid chain: DNA double-strand break repair helicase HerA (551 aa).

ATP is bound by residues Arg152, 161 to 166, and 507 to 508; these read GAGKSN and RI.

This sequence belongs to the HerA family. In terms of assembly, homohexamer. Interacts with NurA.

It carries out the reaction Couples ATP hydrolysis with the unwinding of duplex DNA at the replication fork by translocating in the 5'-3' direction. This creates two antiparallel DNA single strands (ssDNA). The leading ssDNA polymer is the template for DNA polymerase III holoenzyme which synthesizes a continuous strand.. The enzyme catalyses ATP + H2O = ADP + phosphate + H(+). The catalysed reaction is Couples ATP hydrolysis with the unwinding of duplex DNA by translocating in the 3'-5' direction.. Helicase activity is stimulated in the presence of NurA. Involved in DNA double-strand break (DSB) repair. Probably acts with NurA to stimulate resection of the 5' strand and produce the long 3' single-strand that is required for RadA loading. Has DNA-dependent ATPase activity and DNA helicase activity. The sequence is that of DNA double-strand break repair helicase HerA from Pyrococcus furiosus (strain ATCC 43587 / DSM 3638 / JCM 8422 / Vc1).